The primary structure comprises 429 residues: L-dopachrome tautomerase yellow-f (429 aa).

A signal peptide spans 1-23; sequence MLSLDVLLLCAISGFQLLISADG. Residues N133 and N372 are each glycosylated (N-linked (GlcNAc...) asparagine).

Belongs to the major royal jelly protein family.

The protein resides in the secreted. It catalyses the reaction L-dopachrome = 5,6-dihydroxyindole-2-carboxylate. It participates in pigment biosynthesis; melanin biosynthesis. Its function is as follows. Tautomerization of L-dopachrome with decarboxylation to give 5,6-dihydroxyindole (DHI). Also catalyzes the tautomerization of the methyl ester of L-dopachrome and dopamine chrome. May play a role in melanization reactions during late pupal and adult stages. May play a role in melanization reactions during larval and early pupal stages. This Drosophila melanogaster (Fruit fly) protein is L-dopachrome tautomerase yellow-f.